Reading from the N-terminus, the 406-residue chain is Solanesyl diphosphate synthase 1, chloroplastic (406 aa).

The N-terminal 71 residues, 1–71 (MMTSCRNIDL…NGIGQSQTVS (71 aa)), are a transit peptide targeting the chloroplast. 3 residues coordinate isopentenyl diphosphate: Lys126, Arg129, and His164. Mg(2+) contacts are provided by Asp171 and Asp175. Arg180 serves as a coordination point for an all-trans-polyprenyl diphosphate. Arg181 serves as a coordination point for isopentenyl diphosphate. Residues Lys257, Thr258, Gln295, and Lys312 each contribute to the an all-trans-polyprenyl diphosphate site.

It belongs to the FPP/GGPP synthase family. Homodimer. Interacts with FBN5. It depends on Mg(2+) as a cofactor. In terms of tissue distribution, higher expression in leaves than in roots.

Its subcellular location is the plastid. It is found in the chloroplast. It carries out the reaction 5 isopentenyl diphosphate + (2E,6E,10E)-geranylgeranyl diphosphate = all-trans-nonaprenyl diphosphate + 5 diphosphate. It catalyses the reaction isopentenyl diphosphate + (2E,6E)-farnesyl diphosphate = (2E,6E,10E)-geranylgeranyl diphosphate + diphosphate. Functionally, involved in providing solanesyl diphosphate for plastoquinone-9 (PQ-9) formation in plastids. Catalyzes the elongation of the prenyl side chain of PQ-9 in plastids. Contributes to the biosynthesis of plastochromanol-8 (PC-8) in plastids. Does not contribute to the synthesis of tocopherol or ubiquinone. PQ-9 and PC-8 are lipophilic antioxidants that act as protectant against photooxidative stress under high light stress conditions. Prefers geranylgeranyl diphosphate to farnesyl diphosphate as substrate. No activity with geranyl diphosphate or dimethylallyl diphosphate as substrate. This Arabidopsis thaliana (Mouse-ear cress) protein is Solanesyl diphosphate synthase 1, chloroplastic.